The following is a 487-amino-acid chain: N-succinylglutamate 5-semialdehyde dehydrogenase (487 aa).

Residue 221 to 226 participates in NAD(+) binding; sequence GSSDTG. Residues Glu244 and Cys278 contribute to the active site.

This sequence belongs to the aldehyde dehydrogenase family. AstD subfamily.

It carries out the reaction N-succinyl-L-glutamate 5-semialdehyde + NAD(+) + H2O = N-succinyl-L-glutamate + NADH + 2 H(+). The protein operates within amino-acid degradation; L-arginine degradation via AST pathway; L-glutamate and succinate from L-arginine: step 4/5. Catalyzes the NAD-dependent reduction of succinylglutamate semialdehyde into succinylglutamate. The protein is N-succinylglutamate 5-semialdehyde dehydrogenase of Burkholderia cenocepacia (strain HI2424).